Here is a 492-residue protein sequence, read N- to C-terminus: Adenylyltransferase and sulfurtransferase uba4 (492 aa).

ATP-binding positions include glycine 99, aspartate 120, 127–131, lysine 144, and 188–189; these read SNLHR and DN. Zn(2+)-binding residues include cysteine 237 and cysteine 240. Catalysis depends on cysteine 254, which acts as the Glycyl thioester intermediate; for adenylyltransferase activity. Zn(2+)-binding residues include cysteine 317 and cysteine 320. One can recognise a Rhodanese domain in the interval 378–490; it reads GSKEPTIIDV…WREQIDPDWP (113 aa). Cysteine 445 serves as the catalytic Cysteine persulfide intermediate; for sulfurtransferase activity.

It in the N-terminal section; belongs to the HesA/MoeB/ThiF family. UBA4 subfamily. Requires Zn(2+) as cofactor.

The protein localises to the cytoplasm. The protein resides in the cytosol. The catalysed reaction is [molybdopterin-synthase sulfur-carrier protein]-C-terminal Gly-Gly + ATP + H(+) = [molybdopterin-synthase sulfur-carrier protein]-C-terminal Gly-Gly-AMP + diphosphate. It carries out the reaction [molybdopterin-synthase sulfur-carrier protein]-C-terminal Gly-Gly-AMP + S-sulfanyl-L-cysteinyl-[cysteine desulfurase] + AH2 = [molybdopterin-synthase sulfur-carrier protein]-C-terminal-Gly-aminoethanethioate + L-cysteinyl-[cysteine desulfurase] + A + AMP + 2 H(+). It functions in the pathway tRNA modification; 5-methoxycarbonylmethyl-2-thiouridine-tRNA biosynthesis. It participates in cofactor biosynthesis; molybdopterin biosynthesis. Plays a central role in 2-thiolation of mcm(5)S(2)U at tRNA wobble positions of cytosolic tRNA(Lys), tRNA(Glu) and tRNA(Gln). Also essential during biosynthesis of the molybdenum cofactor. Acts by mediating the C-terminal thiocarboxylation of sulfur carriers urm1 and mocs2a. Its N-terminus first activates urm1 and mocs2a as acyl-adenylates (-COAMP), then the persulfide sulfur on the catalytic cysteine is transferred to urm1 and mocs2a to form thiocarboxylation (-COSH) of their C-terminus. The reaction probably involves hydrogen sulfide that is generated from the persulfide intermediate and that acts as a nucleophile towards urm1 and mocs2a. Subsequently, a transient disulfide bond is formed. Does not use thiosulfate as sulfur donor; nfs1 probably acting as a sulfur donor for thiocarboxylation reactions. The chain is Adenylyltransferase and sulfurtransferase uba4 from Aspergillus clavatus (strain ATCC 1007 / CBS 513.65 / DSM 816 / NCTC 3887 / NRRL 1 / QM 1276 / 107).